A 248-amino-acid chain; its full sequence is 26.2 kDa heat shock protein, mitochondrial (248 aa).

The N-terminal 32 residues, 1 to 32 (MASTVALKGRPLATLLRQLLAADAPPAATGRP), are a transit peptide targeting the mitochondrion. Residues 26-48 (PAATGRPVAAAPAASGKPVTAPA) form a disordered region. The 110-residue stretch at 139–248 (ATAAARRGGW…RKDVFQVNVE (110 aa)) folds into the sHSP domain.

Belongs to the small heat shock protein (HSP20) family. In terms of assembly, may form oligomeric structures.

The protein localises to the mitochondrion. The chain is 26.2 kDa heat shock protein, mitochondrial (HSP26.2) from Oryza sativa subsp. japonica (Rice).